The primary structure comprises 436 residues: 5-methylthioadenosine/S-adenosylhomocysteine deaminase (436 aa).

The Zn(2+) site is built by His-66 and His-68. Residues Glu-95, Arg-147, Arg-161, and His-187 each contribute to the substrate site. His-214 provides a ligand contact to Zn(2+). Glu-217 and Asp-303 together coordinate substrate. Position 303 (Asp-303) interacts with Zn(2+).

It belongs to the metallo-dependent hydrolases superfamily. MTA/SAH deaminase family. Zn(2+) serves as cofactor.

It catalyses the reaction S-adenosyl-L-homocysteine + H2O + H(+) = S-inosyl-L-homocysteine + NH4(+). The enzyme catalyses S-methyl-5'-thioadenosine + H2O + H(+) = S-methyl-5'-thioinosine + NH4(+). Its function is as follows. Catalyzes the deamination of 5-methylthioadenosine and S-adenosyl-L-homocysteine into 5-methylthioinosine and S-inosyl-L-homocysteine, respectively. Is also able to deaminate adenosine. The protein is 5-methylthioadenosine/S-adenosylhomocysteine deaminase of Symbiobacterium thermophilum (strain DSM 24528 / JCM 14929 / IAM 14863 / T).